A 354-amino-acid polypeptide reads, in one-letter code: MLYYFYSIFHINIFQYITVRAGIAFFFAFFLTLYLMPKFIRWAMKKSSYQPIYSLAPEHHKKKANTPTMGGVVFIFSALLASLLTVKIHNPYVLGGFLTILGFLAIGVIDDYGKITKRSNQSGLSAKQKFFLQILVAFVVSLFLYEYAHLNSNLYVPFYKYPLLDMKIFGILFWTLVIVATSNAVNLTDGLDGLATVPSIMALTTLAIITYITGNAVLSHYLLLPKIIGVGEVSIIAAAFAGSLIGFLWYNCHPAEVFMGDSGSLTLGAFIGYMAIISKSEVLLILIGFVFVMEALSVIIQVGSFKLRKKRVFLMAPIHHHFEQKNWNESKIIVRFWIIALISNLIALITLKIR.

Transmembrane regions (helical) follow at residues 16-36 (YITV…LYLM), 66-86 (TPTM…LLTV), 88-108 (IHNP…AIGV), 130-150 (FFLQ…YAHL), 168-188 (IFGI…VNLT), 193-213 (GLAT…TYIT), 227-247 (IIGV…LIGF), 257-277 (VFMG…MAII), 282-302 (VLLI…IIQV), and 331-351 (KIIV…LITL).

This sequence belongs to the glycosyltransferase 4 family. MraY subfamily. The cofactor is Mg(2+).

It localises to the cell inner membrane. It catalyses the reaction UDP-N-acetyl-alpha-D-muramoyl-L-alanyl-gamma-D-glutamyl-meso-2,6-diaminopimeloyl-D-alanyl-D-alanine + di-trans,octa-cis-undecaprenyl phosphate = di-trans,octa-cis-undecaprenyl diphospho-N-acetyl-alpha-D-muramoyl-L-alanyl-D-glutamyl-meso-2,6-diaminopimeloyl-D-alanyl-D-alanine + UMP. It participates in cell wall biogenesis; peptidoglycan biosynthesis. Catalyzes the initial step of the lipid cycle reactions in the biosynthesis of the cell wall peptidoglycan: transfers peptidoglycan precursor phospho-MurNAc-pentapeptide from UDP-MurNAc-pentapeptide onto the lipid carrier undecaprenyl phosphate, yielding undecaprenyl-pyrophosphoryl-MurNAc-pentapeptide, known as lipid I. The sequence is that of Phospho-N-acetylmuramoyl-pentapeptide-transferase from Nitratiruptor sp. (strain SB155-2).